The sequence spans 968 residues: MIPELGRRPMHRGNEDSSFGDDYEKEIGVLLGEQQRRQVEADELERELNLFRSGSAPPTVDGSVSAAGGLFSGGGGAPFLEFGGVNKGNGFGGDDEEFRKDPAYLSYYYANMKLNPRLPPPLMSREDLRVAQRLKGSNNVLGGVGDRRKVNDNRSLFSMPPGFEGEKTGASASEWDANGLIGLPGLGLGGKQKSFADIFQADMGHGHPVAQQPSRPASRNTFDENVDSNNNLSPSASQGIGAPSPYSYAAVLGSSLSRNGTPDPQAIARVPSPCLTPIGSGRMSSNDKRNTSNQSPFNGVTSGLNESSDLVNALSGLNLSCSVGLDDRSQAEQDVEKVRNYMFGLQGGHNEVNQHEFPNKSDQAHKATGSLRNSQLRGPHGSAYNGGVGLANPYQQLDSPNYCLNNYALNPAVASMMANQLGNNNFAPMYDNVSALGFSGMDSRHHGRGFVSSGQNLSESRNLGRFSNRMMGGGAGLQSHMVDPMYNQYADSLDLLNDPSMDRNFMGGSSYMDMLELQRAYLGAQKSQYGVPYKSGSPNSHSYYGSPTFGSNMSYPGSPLAHHGMPNSLMSPYSPMRRDEVNMRFPSATRNYSGGLMGSWHMDASFDEGFGSSMLEEFKSNKTRGFELSEIAGHVVEFSSDQYGSRFIQQKLETATTDEKNMVYEEIMPQALVLMTDVFGNYVIQKFFEHGLPPQRRELAEKLFDHVLPLSLQMYGCRVIQKAIEVVDLDQKIKMVKELDGHVMRCVRDQNGNHVVQKCIECVPEENIEFIISTFFGHVVTLSTHPYGCRVIQRVLEHCHDPDTQSKVMEEILSTVSMLAQDQYGNYVVQHVLEHGKPDERTVIIKELAGKIVQMSQQKFASNVVEKCLTFGGPEERELLVNEMLGTTDENEPLQAMMKDQFANYVVQKVLETCDDQQRELILTRIKVHLTALKKYTYGKHVVARIEKLVAAGERRMALQSLTQPQMA.

Disordered stretches follow at residues 1–25 and 138–171; these read MIPELGRRPMHRGNEDSSFGDDYEK and NNVLGGVGDRRKVNDNRSLFSMPPGFEGEKTGAS. Serine 194 is modified (phosphoserine). 3 disordered regions span residues 204–240, 260–303, and 360–382; these read GHGHPVAQQPSRPASRNTFDENVDSNNNLSPSASQGI, GTPD…VTSG, and KSDQAHKATGSLRNSQLRGPHGS. 2 stretches are compositionally biased toward polar residues: residues 211–220 and 227–238; these read QQPSRPASRN and DSNNNLSPSASQ. Residue threonine 261 is modified to Phosphothreonine. Over residues 291–303 the composition is skewed to polar residues; sequence TSNQSPFNGVTSG. Residues 610–950 enclose the PUM-HD domain; sequence FGSSMLEEFK…HVVARIEKLV (341 aa). Pumilio repeat units lie at residues 630–665, 666–701, 702–737, 738–773, 774–810, 811–846, 847–882, and 883–924; these read EIAGHVVEFSSDQYGSRFIQQKLETATTDEKNMVYE, EIMPQALVLMTDVFGNYVIQKFFEHGLPPQRRELAE, KLFDHVLPLSLQMYGCRVIQKAIEVVDLDQKIKMVK, ELDGHVMRCVRDQNGNHVVQKCIECVPEENIEFIIS, TFFGHVVTLSTHPYGCRVIQRVLEHCHDPDTQSKVME, EILSTVSMLAQDQYGNYVVQHVLEHGKPDERTVIIK, ELAGKIVQMSQQKFASNVVEKCLTFGGPEERELLVN, and EMLG…LILT.

The protein localises to the cytoplasm. Sequence-specific RNA-binding protein that regulates translation and mRNA stability by binding the 3'-UTR of target mRNAs. Binds the APUM-binding elements (APBEs) in the 3'-UTR mRNA sequence of CLV1, PNH, WUS and FAS2. The sequence is that of Pumilio homolog 1 (APUM1) from Arabidopsis thaliana (Mouse-ear cress).